We begin with the raw amino-acid sequence, 102 residues long: Urease subunit beta (102 aa).

The protein belongs to the urease beta subunit family. Heterotrimer of UreA (gamma), UreB (beta) and UreC (alpha) subunits. Three heterotrimers associate to form the active enzyme.

Its subcellular location is the cytoplasm. It carries out the reaction urea + 2 H2O + H(+) = hydrogencarbonate + 2 NH4(+). Its pathway is nitrogen metabolism; urea degradation; CO(2) and NH(3) from urea (urease route): step 1/1. The sequence is that of Urease subunit beta from Trichodesmium erythraeum (strain IMS101).